Consider the following 428-residue polypeptide: 3-phosphoshikimate 1-carboxyvinyltransferase (428 aa).

3-phosphoshikimate contacts are provided by lysine 23, serine 24, and arginine 28. Lysine 23 lines the phosphoenolpyruvate pocket. Phosphoenolpyruvate contacts are provided by glycine 97 and arginine 125. Serine 170, serine 171, glutamine 172, serine 198, aspartate 314, asparagine 337, and lysine 341 together coordinate 3-phosphoshikimate. Glutamine 172 serves as a coordination point for phosphoenolpyruvate. Aspartate 314 (proton acceptor) is an active-site residue. Phosphoenolpyruvate is bound by residues arginine 345, arginine 387, and lysine 412.

The protein belongs to the EPSP synthase family. In terms of assembly, monomer.

It localises to the cytoplasm. The catalysed reaction is 3-phosphoshikimate + phosphoenolpyruvate = 5-O-(1-carboxyvinyl)-3-phosphoshikimate + phosphate. It participates in metabolic intermediate biosynthesis; chorismate biosynthesis; chorismate from D-erythrose 4-phosphate and phosphoenolpyruvate: step 6/7. Its function is as follows. Catalyzes the transfer of the enolpyruvyl moiety of phosphoenolpyruvate (PEP) to the 5-hydroxyl of shikimate-3-phosphate (S3P) to produce enolpyruvyl shikimate-3-phosphate and inorganic phosphate. The protein is 3-phosphoshikimate 1-carboxyvinyltransferase of Yersinia pseudotuberculosis serotype IB (strain PB1/+).